The sequence spans 288 residues: Mortality factor 4-like protein 2 (288 aa).

Residues methionine 1 to serine 15 are compositionally biased toward polar residues. A disordered region spans residues methionine 1–glutamate 113. Position 71 is a phosphoserine (serine 71). In terms of domain architecture, MRG spans asparagine 117 to leucine 288.

Component of the NuA4 histone acetyltransferase complex which contains the catalytic subunit KAT5/TIP60 and the subunits EP400, TRRAP/PAF400, BRD8/SMAP, EPC1, DMAP1/DNMAP1, RUVBL1/TIP49, RUVBL2, ING3, actin, ACTL6A/BAF53A, MORF4L1/MRG15, MORF4L2/MRGX, MRGBP, YEATS4/GAS41 and VPS72/YL1. The NuA4 complex interacts with MYC and the adenovirus E1A protein. MORF4L1 may also participate in the formation of NuA4 related complexes which lack the KAT5/TIP60 catalytic subunit, but which include the SWI/SNF related protein SRCAP. Component of the MSIN3A histone deacetylase complex, which includes SIN3A, HDAC2, ARID4B, MORF4L1, RBBP4/RbAp48, and RBBP7/RbAp46. Interacts with MRFAP1 and RB1. May also interact with one or more as yet undefined members of the TLE (transducin-like enhancer of split) family of transcriptional repressors.

Its subcellular location is the nucleus. In terms of biological role, component of the NuA4 histone acetyltransferase complex which is involved in transcriptional activation of select genes principally by acetylation of nucleosomal histone H4 and H2A. This modification may both alter nucleosome - DNA interactions and promote interaction of the modified histones with other proteins which positively regulate transcription. This complex may be required for the activation of transcriptional programs associated with oncogene and proto-oncogene mediated growth induction, tumor suppressor mediated growth arrest and replicative senescence, apoptosis, and DNA repair. The NuA4 complex ATPase and helicase activities seem to be, at least in part, contributed by the association of RUVBL1 and RUVBL2 with EP400. NuA4 may also play a direct role in DNA repair when directly recruited to sites of DNA damage. Also a component of the MSIN3A complex which acts to repress transcription by deacetylation of nucleosomal histones. The polypeptide is Mortality factor 4-like protein 2 (MORF4L2) (Macaca fascicularis (Crab-eating macaque)).